The following is a 695-amino-acid chain: Pre-mRNA-splicing factor clf-1 (695 aa).

HAT repeat units follow at residues 52–84, 86–118, 120–152, 154–185, 187–218, 220–259, 261–295, 305–337, 339–373, 383–419, 421–452, 454–486, 488–522, 524–555, 578–616, and 621–654; these read EYQG…WELE, KEFA…AEIK, RNIN…VMEM, GDIP…LEKR, GEFD…FEEE, GTSD…YEAR, REYE…FEKQ, VILT…LEES, GDVD…LFLF, KDIG…FEIR, GQLT…LEQK, YEFE…LERG, DDLE…FEEE, GEYE…FEIN, EAKA…FEKT, and EDIE…YIFP.

It belongs to the crooked-neck family. As to quaternary structure, associated with the spliceosome.

It localises to the nucleus. Involved in pre-mRNA splicing and cell cycle progression. Required for the spliceosome assembly and initiation of the DNA replication. This chain is Pre-mRNA-splicing factor clf-1 (clf-1), found in Neurospora crassa (strain ATCC 24698 / 74-OR23-1A / CBS 708.71 / DSM 1257 / FGSC 987).